Here is a 159-residue protein sequence, read N- to C-terminus: Ribosomal RNA large subunit methyltransferase H (159 aa).

G108 provides a ligand contact to S-adenosyl-L-methionine.

It belongs to the RNA methyltransferase RlmH family. As to quaternary structure, homodimer.

The protein localises to the cytoplasm. The enzyme catalyses pseudouridine(1915) in 23S rRNA + S-adenosyl-L-methionine = N(3)-methylpseudouridine(1915) in 23S rRNA + S-adenosyl-L-homocysteine + H(+). Functionally, specifically methylates the pseudouridine at position 1915 (m3Psi1915) in 23S rRNA. This chain is Ribosomal RNA large subunit methyltransferase H, found in Lactobacillus gasseri (strain ATCC 33323 / DSM 20243 / BCRC 14619 / CIP 102991 / JCM 1131 / KCTC 3163 / NCIMB 11718 / NCTC 13722 / AM63).